The following is a 314-amino-acid chain: Aromatic prenyltransferase (314 aa).

The protein belongs to the aromatic prenyltransferase family.

Prenyltransferase that attaches isoprenoid moieties to carbon atoms of aromatic substrates in an enzyme-catalyzed Friedel-Crafts reaction. This is Aromatic prenyltransferase from Arthroderma otae (strain ATCC MYA-4605 / CBS 113480) (Microsporum canis).